A 320-amino-acid polypeptide reads, in one-letter code: GDSL esterase/lipase At3g43570 (320 aa).

Positions 1–19 (MKIQIIWLTLVLIVVEANA) are cleaved as a signal peptide. An N-linked (GlcNAc...) asparagine glycan is attached at Asn-25. Ser-37 functions as the Nucleophile in the catalytic mechanism. The N-linked (GlcNAc...) asparagine glycan is linked to Asn-287. Active-site residues include Asp-295 and His-298.

This sequence belongs to the 'GDSL' lipolytic enzyme family.

The protein localises to the secreted. This Arabidopsis thaliana (Mouse-ear cress) protein is GDSL esterase/lipase At3g43570.